Here is a 430-residue protein sequence, read N- to C-terminus: Serine--tRNA ligase (430 aa).

237-239 contributes to the L-serine binding site; sequence TAE. Residue 268-270 participates in ATP binding; the sequence is RSE. Position 291 (E291) interacts with L-serine. Residue 355 to 358 participates in ATP binding; that stretch reads EISS. Residue S391 participates in L-serine binding.

This sequence belongs to the class-II aminoacyl-tRNA synthetase family. Type-1 seryl-tRNA synthetase subfamily. Homodimer. The tRNA molecule binds across the dimer.

Its subcellular location is the cytoplasm. It carries out the reaction tRNA(Ser) + L-serine + ATP = L-seryl-tRNA(Ser) + AMP + diphosphate + H(+). It catalyses the reaction tRNA(Sec) + L-serine + ATP = L-seryl-tRNA(Sec) + AMP + diphosphate + H(+). Its pathway is aminoacyl-tRNA biosynthesis; selenocysteinyl-tRNA(Sec) biosynthesis; L-seryl-tRNA(Sec) from L-serine and tRNA(Sec): step 1/1. Its function is as follows. Catalyzes the attachment of serine to tRNA(Ser). Is also able to aminoacylate tRNA(Sec) with serine, to form the misacylated tRNA L-seryl-tRNA(Sec), which will be further converted into selenocysteinyl-tRNA(Sec). This is Serine--tRNA ligase from Klebsiella pneumoniae subsp. pneumoniae (strain ATCC 700721 / MGH 78578).